The sequence spans 306 residues: Natural cytotoxicity triggering receptor 1 (306 aa).

The N-terminal stretch at 1–21 (MSSTLRALLCLGLCLSQRISA) is a signal peptide. The Extracellular portion of the chain corresponds to 22–257 (PKQTLPKPII…WDHTAQNLLR (236 aa)). Ig-like domains follow at residues 42–100 (EKQA…SCIY) and 137–192 (GEKV…RCFG). Disulfide bonds link Cys-49/Cys-98 and Cys-144/Cys-190. N-linked (GlcNAc...) asparagine glycosylation occurs at Asn-216. A helical membrane pass occupies residues 258 to 278 (MGLAFLVLVALVCLLVEDWLS). At 279–306 (RKRTREQASRASTWEGRRRLNKHKDSEE) the chain is on the cytoplasmic side.

This sequence belongs to the natural cytotoxicity receptor (NCR) family. As to quaternary structure, interacts with CD3Z and FCER1G. Expressed in NK cells.

The protein localises to the cell membrane. Functionally, cytotoxicity-activating receptor that may contribute to the increased efficiency of activated natural killer (NK) cells to mediate tumor cell lysis. The sequence is that of Natural cytotoxicity triggering receptor 1 (NCR1) from Macaca fascicularis (Crab-eating macaque).